The sequence spans 143 residues: Large ribosomal subunit protein uL11 (143 aa).

It belongs to the universal ribosomal protein uL11 family. Part of the ribosomal stalk of the 50S ribosomal subunit. Interacts with L10 and the large rRNA to form the base of the stalk. L10 forms an elongated spine to which L12 dimers bind in a sequential fashion forming a multimeric L10(L12)X complex. Post-translationally, one or more lysine residues are methylated.

Forms part of the ribosomal stalk which helps the ribosome interact with GTP-bound translation factors. The chain is Large ribosomal subunit protein uL11 from Azoarcus sp. (strain BH72).